A 179-amino-acid chain; its full sequence is Inner membrane-spanning protein YciB (179 aa).

5 consecutive transmembrane segments (helical) span residues Phe-3 to Tyr-23, Pro-49 to His-69, Trp-76 to Trp-96, Val-121 to Phe-141, and Phe-149 to Leu-169.

It belongs to the YciB family.

It is found in the cell inner membrane. In terms of biological role, plays a role in cell envelope biogenesis, maintenance of cell envelope integrity and membrane homeostasis. This chain is Inner membrane-spanning protein YciB, found in Cupriavidus metallidurans (strain ATCC 43123 / DSM 2839 / NBRC 102507 / CH34) (Ralstonia metallidurans).